We begin with the raw amino-acid sequence, 40 residues long: MADTTGRIPLWIIGTVAGIPVIGLIGIFFYGSYSGLGSSL.

A helical transmembrane segment spans residues 8 to 28; sequence IPLWIIGTVAGIPVIGLIGIF.

It belongs to the PsbJ family. PSII is composed of 1 copy each of membrane proteins PsbA, PsbB, PsbC, PsbD, PsbE, PsbF, PsbH, PsbI, PsbJ, PsbK, PsbL, PsbM, PsbT, PsbX, PsbY, PsbZ, Psb30/Ycf12, at least 3 peripheral proteins of the oxygen-evolving complex and a large number of cofactors. It forms dimeric complexes.

It localises to the plastid. Its subcellular location is the chloroplast thylakoid membrane. In terms of biological role, one of the components of the core complex of photosystem II (PSII). PSII is a light-driven water:plastoquinone oxidoreductase that uses light energy to abstract electrons from H(2)O, generating O(2) and a proton gradient subsequently used for ATP formation. It consists of a core antenna complex that captures photons, and an electron transfer chain that converts photonic excitation into a charge separation. In Pelargonium hortorum (Common geranium), this protein is Photosystem II reaction center protein J.